A 382-amino-acid polypeptide reads, in one-letter code: Lactosylceramide 1,3-N-acetyl-beta-D-glucosaminyltransferase B (382 aa).

Residues 1–13 (MAVLKMPRFKKYH) lie on the Cytoplasmic side of the membrane. The chain crosses the membrane as a helical; Signal-anchor for type II membrane protein span at residues 14-30 (LRLMITCFSTLLLMTYW). Residues 31-382 (EKIDNCVVTH…CKAAFFEEDT (352 aa)) lie on the Lumenal side of the membrane. Asn57, Asn112, Asn167, and Asn276 each carry an N-linked (GlcNAc...) asparagine glycan.

It belongs to the glycosyltransferase 31 family.

Its subcellular location is the golgi apparatus membrane. The catalysed reaction is a beta-D-Gal-(1-&gt;4)-beta-D-Glc-(1&lt;-&gt;1)-Cer(d18:1(4E)) + UDP-N-acetyl-alpha-D-glucosamine = a beta-D-GlcNAc-(1-&gt;3)-beta-D-Gal-(1-&gt;4)-beta-D-Glc-(1&lt;-&gt;1)-Cer(d18:1(4E)) + UDP + H(+). It catalyses the reaction a neolactoside nLc4Cer(d18:1(4E)) + UDP-N-acetyl-alpha-D-glucosamine = a neolactoside IV(3)-beta-GlcNAc-nLc4Cer(d18:1(4E)) + UDP + H(+). It participates in protein modification; protein glycosylation. Its function is as follows. Beta-1,3-N-acetylglucosaminyltransferase that plays a key role in the synthesis of lacto- or neolacto-series carbohydrate chains on glycolipids. The polypeptide is Lactosylceramide 1,3-N-acetyl-beta-D-glucosaminyltransferase B (b3gnt5b) (Danio rerio (Zebrafish)).